Consider the following 395-residue polypeptide: D-alanine--D-alanine ligase (395 aa).

The region spanning 172–391 (KVVLDAAGIP…YTELITRLIE (220 aa)) is the ATP-grasp domain. 204–266 (DAGLTYPLFV…EQGIDGREIE (63 aa)) is a binding site for ATP. Mg(2+)-binding residues include Asp-345, Glu-358, and Asn-360.

It belongs to the D-alanine--D-alanine ligase family. The cofactor is Mg(2+). Mn(2+) is required as a cofactor.

The protein resides in the cytoplasm. It carries out the reaction 2 D-alanine + ATP = D-alanyl-D-alanine + ADP + phosphate + H(+). It participates in cell wall biogenesis; peptidoglycan biosynthesis. Cell wall formation. In Bifidobacterium longum (strain DJO10A), this protein is D-alanine--D-alanine ligase.